We begin with the raw amino-acid sequence, 314 residues long: MTQTLPAGLTVTARVPASSANLGPGFDTLGIALGLYDEITVTTTASGLNIRVEGEGADDVPWGPSHLVVRAIERGLESAGVWADGLDVVCRNVIPHSRGLGSSASAVVGGLAAANGLAIKLDPELGLSLDQLVQLSSEFEGHPDNASASVLGGAVVSWSCAGEQADGAPAATDIYSAVALKVHPAIRVVALVPGERSSTAHTRGLLPETVPHRDAAFNVSRGALAVVALTERPDLLMAATEDRLHQTQRAPALPLTTRWIAVLRKAGIAATVSGAGPTVLALTTEPFPVELRAQAEAEGLQVLELDVADGVRTS.

Residue 95–105 coordinates ATP; sequence PHSRGLGSSAS.

It belongs to the GHMP kinase family. Homoserine kinase subfamily.

Its subcellular location is the cytoplasm. The catalysed reaction is L-homoserine + ATP = O-phospho-L-homoserine + ADP + H(+). It participates in amino-acid biosynthesis; L-threonine biosynthesis; L-threonine from L-aspartate: step 4/5. Its function is as follows. Catalyzes the ATP-dependent phosphorylation of L-homoserine to L-homoserine phosphate. In Rhodococcus opacus (strain B4), this protein is Homoserine kinase.